The chain runs to 184 residues: MQFTSISNSLTSTAAIGLSFTTSTTTTATFTTNTTTTITSGFTVNQNQLLSRGFENLVPYTSTVSVVATPVMTYGHLEGLINEWNLELEDQEKYFLLQATQVNAWDHTLIENGEMIRILHGEVNKVKLDQKRLEQELDFILSQQQELEFLLTYLEESTRDQSGLHYLQDADEEHVEISTRSAEF.

The stretch at 117 to 151 (RILHGEVNKVKLDQKRLEQELDFILSQQQELEFLL) forms a coiled coil.

This sequence belongs to the nucleoporin NSP1/NUP62 family.

This chain is Nucleoporin-62 C-terminal-like protein (NUP62CL), found in Homo sapiens (Human).